Consider the following 338-residue polypeptide: Ketol-acid reductoisomerase (NADP(+)) (338 aa).

The region spanning 1 to 181 is the KARI N-terminal Rossmann domain; the sequence is MKVFYDKDCD…GGGKAGIIET (181 aa). NADP(+) is bound by residues 24–27, arginine 47, and serine 52; that span reads YGSQ. Histidine 107 is a catalytic residue. Glycine 133 is an NADP(+) binding site. One can recognise a KARI C-terminal knotted domain in the interval 182 to 327; it reads TFREETETDL…EKLRAMMPWI (146 aa). The Mg(2+) site is built by aspartate 190, glutamate 194, glutamate 226, and glutamate 230. Serine 251 provides a ligand contact to substrate.

Belongs to the ketol-acid reductoisomerase family. Mg(2+) is required as a cofactor.

The enzyme catalyses (2R)-2,3-dihydroxy-3-methylbutanoate + NADP(+) = (2S)-2-acetolactate + NADPH + H(+). It carries out the reaction (2R,3R)-2,3-dihydroxy-3-methylpentanoate + NADP(+) = (S)-2-ethyl-2-hydroxy-3-oxobutanoate + NADPH + H(+). The protein operates within amino-acid biosynthesis; L-isoleucine biosynthesis; L-isoleucine from 2-oxobutanoate: step 2/4. Its pathway is amino-acid biosynthesis; L-valine biosynthesis; L-valine from pyruvate: step 2/4. Involved in the biosynthesis of branched-chain amino acids (BCAA). Catalyzes an alkyl-migration followed by a ketol-acid reduction of (S)-2-acetolactate (S2AL) to yield (R)-2,3-dihydroxy-isovalerate. In the isomerase reaction, S2AL is rearranged via a Mg-dependent methyl migration to produce 3-hydroxy-3-methyl-2-ketobutyrate (HMKB). In the reductase reaction, this 2-ketoacid undergoes a metal-dependent reduction by NADPH to yield (R)-2,3-dihydroxy-isovalerate. The chain is Ketol-acid reductoisomerase (NADP(+)) from Albidiferax ferrireducens (strain ATCC BAA-621 / DSM 15236 / T118) (Rhodoferax ferrireducens).